Consider the following 197-residue polypeptide: RNA-binding protein Rsf1 (197 aa).

In terms of domain architecture, RRM spans 7 to 80 (TRVYVGNLTD…SQLRVEISKG (74 aa)). A disordered region spans residues 74–197 (RVEISKGRPR…SRSPVGNHRF (124 aa)). A compositionally biased stretch (basic and acidic residues) spans 89–102 (GPMDRGGRRGDFGR). The residue at position 106 (T106) is a Phosphothreonine. Low complexity-rich tracts occupy residues 117–144 (QRGS…SYNG) and 166–176 (RYSSGSSASYG). S168, S171, S174, S188, and S190 each carry phosphoserine.

It belongs to the splicing factor SR family. Extensively phosphorylated on serine residues in the RS domain.

It localises to the nucleus. In terms of biological role, may control important aspects of development. The chain is RNA-binding protein Rsf1 (Rsf1) from Drosophila melanogaster (Fruit fly).